A 310-amino-acid chain; its full sequence is tRNA-cytidine(32) 2-sulfurtransferase (310 aa).

The short motif at 44–49 (SGGKDS) is the PP-loop motif element. Positions 119, 122, and 210 each coordinate [4Fe-4S] cluster.

This sequence belongs to the TtcA family. In terms of assembly, homodimer. Requires Mg(2+) as cofactor. [4Fe-4S] cluster is required as a cofactor.

It is found in the cytoplasm. The catalysed reaction is cytidine(32) in tRNA + S-sulfanyl-L-cysteinyl-[cysteine desulfurase] + AH2 + ATP = 2-thiocytidine(32) in tRNA + L-cysteinyl-[cysteine desulfurase] + A + AMP + diphosphate + H(+). It functions in the pathway tRNA modification. Its function is as follows. Catalyzes the ATP-dependent 2-thiolation of cytidine in position 32 of tRNA, to form 2-thiocytidine (s(2)C32). The sulfur atoms are provided by the cysteine/cysteine desulfurase (IscS) system. This is tRNA-cytidine(32) 2-sulfurtransferase from Saccharophagus degradans (strain 2-40 / ATCC 43961 / DSM 17024).